Consider the following 507-residue polypeptide: ATP synthase subunit alpha, chloroplastic (507 aa).

An ATP-binding site is contributed by 170–177; the sequence is GDRQTGKT. Disordered stretches follow at residues 278-325, 392-430, and 452-471; these read PRRP…TQAG, EPEA…APLP, and GQVQ…NKPE. A compositionally biased stretch (basic and acidic residues) spans 282–303; the sequence is PGREAHPGDVPHLHPRPPERAA. Residues 305–322 show a composition bias toward polar residues; it reads LSSQPGEGSTTASPTVET.

Belongs to the ATPase alpha/beta chains family. As to quaternary structure, F-type ATPases have 2 components, CF(1) - the catalytic core - and CF(0) - the membrane proton channel. CF(1) has five subunits: alpha(3), beta(3), gamma(1), delta(1), epsilon(1). CF(0) has four main subunits: a, b, b' and c.

Its subcellular location is the plastid. The protein localises to the chloroplast thylakoid membrane. It catalyses the reaction ATP + H2O + 4 H(+)(in) = ADP + phosphate + 5 H(+)(out). Functionally, produces ATP from ADP in the presence of a proton gradient across the membrane. The alpha chain is a regulatory subunit. The sequence is that of ATP synthase subunit alpha, chloroplastic from Selaginella uncinata (Blue spike-moss).